The primary structure comprises 296 residues: Formamidopyrimidine-DNA glycosylase (296 aa).

Catalysis depends on Pro-2, which acts as the Schiff-base intermediate with DNA. Catalysis depends on Glu-3, which acts as the Proton donor. Lys-58 functions as the Proton donor; for beta-elimination activity in the catalytic mechanism. His-104, Arg-126, and Lys-169 together coordinate DNA. The FPG-type zinc-finger motif lies at 260 to 296 (SVYDREGQACGTPGCGGTVARIVQAGRSTFYCAACQK). The active-site Proton donor; for delta-elimination activity is the Arg-286.

Belongs to the FPG family. As to quaternary structure, monomer. It depends on Zn(2+) as a cofactor.

The enzyme catalyses Hydrolysis of DNA containing ring-opened 7-methylguanine residues, releasing 2,6-diamino-4-hydroxy-5-(N-methyl)formamidopyrimidine.. It carries out the reaction 2'-deoxyribonucleotide-(2'-deoxyribose 5'-phosphate)-2'-deoxyribonucleotide-DNA = a 3'-end 2'-deoxyribonucleotide-(2,3-dehydro-2,3-deoxyribose 5'-phosphate)-DNA + a 5'-end 5'-phospho-2'-deoxyribonucleoside-DNA + H(+). In terms of biological role, involved in base excision repair of DNA damaged by oxidation or by mutagenic agents. Acts as a DNA glycosylase that recognizes and removes damaged bases. Has a preference for oxidized purines, such as 7,8-dihydro-8-oxoguanine (8-oxoG). Has AP (apurinic/apyrimidinic) lyase activity and introduces nicks in the DNA strand. Cleaves the DNA backbone by beta-delta elimination to generate a single-strand break at the site of the removed base with both 3'- and 5'-phosphates. The polypeptide is Formamidopyrimidine-DNA glycosylase (Rhizobium etli (strain CIAT 652)).